The primary structure comprises 180 residues: uncharacterized protein (180 aa).

This is an uncharacterized protein from Haemophilus influenzae (strain ATCC 51907 / DSM 11121 / KW20 / Rd).